A 242-amino-acid chain; its full sequence is Phosphoribosylaminoimidazole-succinocarboxamide synthase (242 aa).

Belongs to the SAICAR synthetase family.

It catalyses the reaction 5-amino-1-(5-phospho-D-ribosyl)imidazole-4-carboxylate + L-aspartate + ATP = (2S)-2-[5-amino-1-(5-phospho-beta-D-ribosyl)imidazole-4-carboxamido]succinate + ADP + phosphate + 2 H(+). The protein operates within purine metabolism; IMP biosynthesis via de novo pathway; 5-amino-1-(5-phospho-D-ribosyl)imidazole-4-carboxamide from 5-amino-1-(5-phospho-D-ribosyl)imidazole-4-carboxylate: step 1/2. This chain is Phosphoribosylaminoimidazole-succinocarboxamide synthase (purC), found in Methanocaldococcus jannaschii (strain ATCC 43067 / DSM 2661 / JAL-1 / JCM 10045 / NBRC 100440) (Methanococcus jannaschii).